A 939-amino-acid chain; its full sequence is Valine--tRNA ligase (939 aa).

The short motif at 47-57 (PNVTGILHMGH) is the 'HIGH' region element. The 'KMSKS' region signature appears at 563 to 567 (KLSKS). Position 566 (K566) interacts with ATP. The stretch at 874–939 (EHLAKERVRL…QSILDKLASL (66 aa)) forms a coiled coil.

The protein belongs to the class-I aminoacyl-tRNA synthetase family. ValS type 1 subfamily. Monomer.

It is found in the cytoplasm. It carries out the reaction tRNA(Val) + L-valine + ATP = L-valyl-tRNA(Val) + AMP + diphosphate. Its function is as follows. Catalyzes the attachment of valine to tRNA(Val). As ValRS can inadvertently accommodate and process structurally similar amino acids such as threonine, to avoid such errors, it has a 'posttransfer' editing activity that hydrolyzes mischarged Thr-tRNA(Val) in a tRNA-dependent manner. The polypeptide is Valine--tRNA ligase (Chlamydia trachomatis serovar L2 (strain ATCC VR-902B / DSM 19102 / 434/Bu)).